Here is a 624-residue protein sequence, read N- to C-terminus: MASPNGGVTTYDYDDSDSAAPVRAQTIEELHSLQRKAAATAKDSASPLQSISASLASTAREYGPNLVKGDPEAKGAPPAPVKHQQAAAAAAIAASDSSLKFTHVLYNLSPAELYEQAFGQKKSSFITSTGALATLSGAKTGRSPRDKRVVKDDTTAQELWWGKGSPNIEMDERQFVINRERALDFLNSLDKVYVNDQFLNWDPENRIKVRIITSRAYHALFMHNMCIRPTEEELETFGTPDFTIYNAGEFPANRYANYMTSSTSINISLARREMVILGTQYAGEMKKGLFGVMHYLMPKRGILSLHSGCNMGKEGDVALFFGLSGTGKTTLSTDHNRLLIGDDEHCWSDNGVSNIEGGCYAKCIDLSKEKEPDIWNAITFGTVLENVVFNERTREVDYADKSITENTRAAYPIEFIPNAKIPCVGPHPKNVILLACDAYGVLPPVSKLNLAQTMYHFISGYTAIVAGTEDGVKEPTATFSACFGAAFIMYHPTKYAAMLAEKMQKYGRTGWLVNTGWSGGRYGVGNRIKLPYTRKIIDAIHSGELLTANYKKTEVFGLEIPTEINGVPSEILDPVNTWTDKAAYKETLLKLAGLFKNNFEVFASYKIGDDNSLTEQILAAGPNF.

Positions 1 to 22 are disordered; that stretch reads MASPNGGVTTYDYDDSDSAAPV. 322–329 contributes to the ATP binding site; the sequence is GLSGTGKT.

It belongs to the phosphoenolpyruvate carboxykinase (ATP) family. In terms of assembly, homohexamer. As to expression, green leaves but not in roots or etiolated shoots.

The protein resides in the cytoplasm. The catalysed reaction is oxaloacetate + ATP = phosphoenolpyruvate + ADP + CO2. It functions in the pathway carbohydrate biosynthesis; gluconeogenesis. This Urochloa panicoides (Panic liverseed grass) protein is Phosphoenolpyruvate carboxykinase (ATP) 1 (PCK1).